The following is a 415-amino-acid chain: Gamma-glutamyl phosphate reductase (415 aa).

Belongs to the gamma-glutamyl phosphate reductase family.

The protein localises to the cytoplasm. It catalyses the reaction L-glutamate 5-semialdehyde + phosphate + NADP(+) = L-glutamyl 5-phosphate + NADPH + H(+). It participates in amino-acid biosynthesis; L-proline biosynthesis; L-glutamate 5-semialdehyde from L-glutamate: step 2/2. In terms of biological role, catalyzes the NADPH-dependent reduction of L-glutamate 5-phosphate into L-glutamate 5-semialdehyde and phosphate. The product spontaneously undergoes cyclization to form 1-pyrroline-5-carboxylate. This Mycobacterium bovis (strain BCG / Pasteur 1173P2) protein is Gamma-glutamyl phosphate reductase.